A 243-amino-acid polypeptide reads, in one-letter code: Transcription factor TFIIS homolog (243 aa).

The TFIIS central domain occupies 77 to 201; it reads MRDIIQMMFF…SQQKVAEKTS (125 aa). The TFIIS-type zinc-finger motif lies at 202 to 242; that stretch reads QLYKCPNCKQRMCTYREVQTRALDEPSTIFCTCKKCGHEFI. Residues C206, C209, C234, and C237 each contribute to the Zn(2+) site.

The protein belongs to the TFS-II family.

Its function is as follows. Putative initiation factor. Necessary for efficient transcription elongation past template-encoded arresting sites. The polypeptide is Transcription factor TFIIS homolog (Ornithodoros (relapsing fever ticks)).